We begin with the raw amino-acid sequence, 122 residues long: S-protein homolog 23 (122 aa).

An N-terminal signal peptide occupies residues 1-20 (MQNLSILLVCSFCILGHVSS). N-linked (GlcNAc...) asparagine glycosylation occurs at asparagine 86.

The protein belongs to the plant self-incompatibility (S1) protein family.

It localises to the secreted. This is S-protein homolog 23 from Arabidopsis thaliana (Mouse-ear cress).